A 157-amino-acid chain; its full sequence is Large ribosomal subunit protein uL15 (157 aa).

This sequence belongs to the universal ribosomal protein uL15 family. In terms of assembly, part of the 50S ribosomal subunit.

In terms of biological role, binds to the 23S rRNA. The chain is Large ribosomal subunit protein uL15 from Ehrlichia ruminantium (strain Welgevonden).